A 78-amino-acid polypeptide reads, in one-letter code: Defensin-like protein 281 (78 aa).

Residues 1–23 form the signal peptide; that stretch reads MASTKYLVLLFICLSVLLTPGLG. Intrachain disulfides connect C37-C60, C46-C72, and C50-C74.

It belongs to the DEFL family.

It localises to the secreted. This Arabidopsis thaliana (Mouse-ear cress) protein is Defensin-like protein 281.